We begin with the raw amino-acid sequence, 443 residues long: Carboxypeptidase M (443 aa).

The first 17 residues, 1-17 (MDFPCLWLGLLLPLVAA), serve as a signal peptide directing secretion. Residues 21–311 (NYHRQEGMEA…ASLIEYIKQV (291 aa)) form the Peptidase M14 domain. N-linked (GlcNAc...) asparagine glycosylation is present at asparagine 38. 2 residues coordinate Zn(2+): histidine 83 and glutamate 86. N-linked (GlcNAc...) asparagine glycosylation is found at asparagine 115 and asparagine 164. 3 disulfides stabilise this stretch: cysteine 138–cysteine 285, cysteine 242–cysteine 284, and cysteine 341–cysteine 410. Histidine 190 is a binding site for Zn(2+). Residue glutamate 281 is the Proton donor/acceptor of the active site. Residues asparagine 363 and asparagine 384 are each glycosylated (N-linked (GlcNAc...) asparagine). A lipid anchor (GPI-anchor amidated serine) is attached at serine 423. Residues 424–443 (AATKPSLFLFLVSLLHIFFK) constitute a propeptide, removed in mature form.

The protein belongs to the peptidase M14 family. Zn(2+) serves as cofactor.

The protein resides in the cell membrane. The enzyme catalyses Cleavage of C-terminal arginine or lysine residues from polypeptides.. Its activity is regulated as follows. Inhibited by O-phenanthroline and MGTA and activated by cobalt. Functionally, specifically removes C-terminal basic residues (Arg or Lys) from peptides and proteins. It is believed to play important roles in the control of peptide hormone and growth factor activity at the cell surface, and in the membrane-localized degradation of extracellular proteins. The sequence is that of Carboxypeptidase M (CPM) from Homo sapiens (Human).